A 171-amino-acid chain; its full sequence is UPF0312 protein SE_0264 (171 aa).

Belongs to the UPF0312 family.

In Staphylococcus epidermidis (strain ATCC 12228 / FDA PCI 1200), this protein is UPF0312 protein SE_0264.